A 581-amino-acid chain; its full sequence is Proline--tRNA ligase (581 aa).

Belongs to the class-II aminoacyl-tRNA synthetase family. ProS type 1 subfamily. In terms of assembly, homodimer.

The protein resides in the cytoplasm. The catalysed reaction is tRNA(Pro) + L-proline + ATP = L-prolyl-tRNA(Pro) + AMP + diphosphate. Its function is as follows. Catalyzes the attachment of proline to tRNA(Pro) in a two-step reaction: proline is first activated by ATP to form Pro-AMP and then transferred to the acceptor end of tRNA(Pro). As ProRS can inadvertently accommodate and process non-cognate amino acids such as alanine and cysteine, to avoid such errors it has two additional distinct editing activities against alanine. One activity is designated as 'pretransfer' editing and involves the tRNA(Pro)-independent hydrolysis of activated Ala-AMP. The other activity is designated 'posttransfer' editing and involves deacylation of mischarged Ala-tRNA(Pro). The misacylated Cys-tRNA(Pro) is not edited by ProRS. In Variovorax paradoxus (strain S110), this protein is Proline--tRNA ligase.